A 385-amino-acid chain; its full sequence is Probable tRNA sulfurtransferase (385 aa).

The THUMP domain occupies 65 to 165 (AILQELFSFL…KEHFLVFTER (101 aa)). ATP contacts are provided by residues 183 to 184 (LL), 208 to 209 (TF), arginine 267, glycine 285, and glutamine 294.

Belongs to the ThiI family.

It localises to the cytoplasm. It carries out the reaction [ThiI sulfur-carrier protein]-S-sulfanyl-L-cysteine + a uridine in tRNA + 2 reduced [2Fe-2S]-[ferredoxin] + ATP + H(+) = [ThiI sulfur-carrier protein]-L-cysteine + a 4-thiouridine in tRNA + 2 oxidized [2Fe-2S]-[ferredoxin] + AMP + diphosphate. The catalysed reaction is [ThiS sulfur-carrier protein]-C-terminal Gly-Gly-AMP + S-sulfanyl-L-cysteinyl-[cysteine desulfurase] + AH2 = [ThiS sulfur-carrier protein]-C-terminal-Gly-aminoethanethioate + L-cysteinyl-[cysteine desulfurase] + A + AMP + 2 H(+). Its pathway is cofactor biosynthesis; thiamine diphosphate biosynthesis. Functionally, catalyzes the ATP-dependent transfer of a sulfur to tRNA to produce 4-thiouridine in position 8 of tRNAs, which functions as a near-UV photosensor. Also catalyzes the transfer of sulfur to the sulfur carrier protein ThiS, forming ThiS-thiocarboxylate. This is a step in the synthesis of thiazole, in the thiamine biosynthesis pathway. The sulfur is donated as persulfide by IscS. The protein is Probable tRNA sulfurtransferase of Mycoplasma genitalium (strain ATCC 33530 / DSM 19775 / NCTC 10195 / G37) (Mycoplasmoides genitalium).